Consider the following 71-residue polypeptide: uncharacterized protein (71 aa).

Residues 12 to 34 (YLYNYFSSTTSWLVFIILSLDTI) traverse the membrane as a helical segment.

The protein localises to the membrane. This is an uncharacterized protein from Schizosaccharomyces pombe (strain 972 / ATCC 24843) (Fission yeast).